Consider the following 439-residue polypeptide: Forkhead box protein J1-A (439 aa).

Residues 124 to 218 (KPPYSYATLI…INGAMKKRRL (95 aa)) constitute a DNA-binding region (fork-head). The segment at 273 to 293 (EHGWNSISDGKSHKRKQPLPK) is disordered. Over residues 284-293 (SHKRKQPLPK) the composition is skewed to basic residues.

This sequence belongs to the FOXJ1 family. As to expression, expressed in two independent areas of stage 10-11 embryos; in the dorsal blastopore lip (Spemann organizer) and shortly after in the ectodermal cells of the animal cap. As development proceeds, cells of the animal cap contribute to the epidermis and show a spotty pattern, which suggests expression in ciliated epidermal cells. Distribution of these cells is uniform in the trunk area of the embryo but more random in the head, being practically absent in the cement gland and olfactory placode. The spotted pattern becomes more dispersed as embryos grow in size. Due to cell movements during gastrulation, expression in the dorsal lip becomes located in the dorsal midline with expression restricted to the neuroectoderm. Expressed transiently in cells of the newly formed neural floor plate in the tail of older tadpoles.

Its subcellular location is the nucleus. Functionally, key transcription factor required for motile ciliogenesis. Activates genes essential for motile cilia formation and function. Required for ciliogenesis in multiciliated cells. This is Forkhead box protein J1-A (foxj1-a) from Xenopus laevis (African clawed frog).